The primary structure comprises 614 residues: Fimbrin (614 aa).

2 consecutive EF-hand domains span residues 16-50 (EEIL…DSKK) and 51-86 (GSYD…LKKG). Positions 29, 31, 35, 40, 66, 68, 70, and 75 each coordinate Ca(2+). Actin-binding regions lie at residues 98-368 (TIKG…GLEP) and 369-614 (LNEE…LMAV). Calponin-homology (CH) domains lie at 112-233 (EEER…RRGL), 261-364 (LPPE…NTHP), 385-495 (EREA…RMNI), and 508-614 (TLSD…LMAV).

Its subcellular location is the cytoplasm. The protein resides in the cytoskeleton. It is found in the actin patch. In terms of biological role, binds to actin, and functionally associates with actin structures involved in the development and maintenance of cell polarity. Plays a role in cytokinesis. Plays important roles in mating and in spore formation. The protein is Fimbrin (fim1) of Schizosaccharomyces pombe (strain 972 / ATCC 24843) (Fission yeast).